A 156-amino-acid polypeptide reads, in one-letter code: Small ribosomal subunit protein uS7 (156 aa).

The protein belongs to the universal ribosomal protein uS7 family. In terms of assembly, part of the 30S ribosomal subunit. Contacts proteins S9 and S11.

Functionally, one of the primary rRNA binding proteins, it binds directly to 16S rRNA where it nucleates assembly of the head domain of the 30S subunit. Is located at the subunit interface close to the decoding center, probably blocks exit of the E-site tRNA. The protein is Small ribosomal subunit protein uS7 of Beijerinckia indica subsp. indica (strain ATCC 9039 / DSM 1715 / NCIMB 8712).